The chain runs to 411 residues: Glutamate dehydrogenase 2 (411 aa).

The active site involves Lys-102.

The protein belongs to the Glu/Leu/Phe/Val dehydrogenases family.

Its subcellular location is the mitochondrion. It carries out the reaction L-glutamate + NAD(+) + H2O = 2-oxoglutarate + NH4(+) + NADH + H(+). The catalysed reaction is L-glutamate + NADP(+) + H2O = 2-oxoglutarate + NH4(+) + NADPH + H(+). The protein is Glutamate dehydrogenase 2 (GDH2) of Arabidopsis thaliana (Mouse-ear cress).